We begin with the raw amino-acid sequence, 461 residues long: Deoxyguanosinetriphosphate triphosphohydrolase-like protein (461 aa).

A disordered region spans residues 22–41 (ERFLPDPPREKDNRPPFRRD). Over residues 24–41 (FLPDPPREKDNRPPFRRD) the composition is skewed to basic and acidic residues. Positions 72–285 (RLTHSLEVAQ…MELADDIAYG (214 aa)) constitute an HD domain.

Belongs to the dGTPase family. Type 2 subfamily.

This Haemophilus influenzae (strain PittGG) protein is Deoxyguanosinetriphosphate triphosphohydrolase-like protein.